The sequence spans 1095 residues: Putative patatin-like phospholipase domain-containing protein M110.7 (1095 aa).

A helical membrane pass occupies residues 9 to 29 (LLLIFENILELCMCITLVILI). Positions 75 to 113 (HKKRSSKEEMTPDKKRDSSEKISKQPPRELFEPNEQEQV) are disordered. A compositionally biased stretch (basic and acidic residues) spans 80–105 (SKEEMTPDKKRDSSEKISKQPPRELF). Residues 144–237 (VETL…LTSF), 327–416 (RKYE…IQFL), and 450–509 (IETG…TVMA) contribute to the a nucleoside 3',5'-cyclic phosphate site. Residues 768 to 935 (IVFGGGGARG…VNNLPADIMR (168 aa)) form the PNPLA domain. Residues 772 to 777 (GGGARG) carry the GXGXXG motif. The short motif at 799-803 (GTSIG) is the GXSXG element. Residue Ser801 is the Nucleophile of the active site. Asp922 serves as the catalytic Proton acceptor. A DGA/G motif is present at residues 922 to 924 (DGA).

This sequence belongs to the NTE family.

Its subcellular location is the membrane. The chain is Putative patatin-like phospholipase domain-containing protein M110.7 from Caenorhabditis elegans.